We begin with the raw amino-acid sequence, 100 residues long: MIPLQHGLILAAILFVLGLTGLLIRRNLLFMLISLEVMINAAALAFVVAGSYWGQADGQVMYILAITLAAAEASIGLALLLQLYRRRHTLDIDTVSEMRG.

The next 3 helical transmembrane spans lie at 4–24 (LQHG…GLLI), 28–48 (LLFM…AFVV), and 60–80 (VMYI…LALL).

Belongs to the complex I subunit 4L family. As to quaternary structure, NDH-1 is composed of 13 different subunits. Subunits NuoA, H, J, K, L, M, N constitute the membrane sector of the complex.

It is found in the cell inner membrane. The enzyme catalyses a quinone + NADH + 5 H(+)(in) = a quinol + NAD(+) + 4 H(+)(out). Its function is as follows. NDH-1 shuttles electrons from NADH, via FMN and iron-sulfur (Fe-S) centers, to quinones in the respiratory chain. The immediate electron acceptor for the enzyme in this species is believed to be ubiquinone. Couples the redox reaction to proton translocation (for every two electrons transferred, four hydrogen ions are translocated across the cytoplasmic membrane), and thus conserves the redox energy in a proton gradient. This is NADH-quinone oxidoreductase subunit K from Yersinia pseudotuberculosis serotype O:1b (strain IP 31758).